A 449-amino-acid polypeptide reads, in one-letter code: Naphthalene 1,2-dioxygenase system, large oxygenase component (449 aa).

In terms of domain architecture, Rieske spans W39–E137. C81, H83, C101, and H104 together coordinate [2Fe-2S] cluster. The Fe cation site is built by H208, H213, and D362.

The protein belongs to the bacterial ring-hydroxylating dioxygenase alpha subunit family. The naphthalene dioxygenase (NDO) multicomponent enzyme system is composed of an electron transfer component and a dioxygenase component (iron sulfur protein (ISP)). The electron transfer component is composed of a ferredoxin reductase (NdoR) and a ferredoxin (NdoA), and the dioxygenase component is formed of a heterohexamer (trimer of heterodimers) of three large alpha subunits (NdoB) and three small beta subunits (NdoC). [2Fe-2S] cluster is required as a cofactor. It depends on Fe(2+) as a cofactor.

It catalyses the reaction naphthalene + NADH + O2 + H(+) = (1R,2S)-1,2-dihydronaphthalene-1,2-diol + NAD(+). The protein operates within aromatic compound metabolism; naphthalene degradation. Functionally, component of the naphthalene dioxygenase (NDO) multicomponent enzyme system which catalyzes the incorporation of both atoms of molecular oxygen into naphthalene to form cis-(1R,2S)-dihydroxy-1,2-dihydronaphthalene. The alpha subunit has a catalytic role in the holoenzyme. This chain is Naphthalene 1,2-dioxygenase system, large oxygenase component, found in Pseudomonas fluorescens.